The chain runs to 179 residues: MIIYLHGFDSTSPGNHEKVLQLQFIDDDVRFINYSTLHPKHDMQHLLKEVSKVIDQANDPNPLICGVGLGAYWSERIGFLCGIKQVMFNPNLHPEKTMAGRIDRPEEYEDIATKCVRQFRTKNQERCLVILSKEDEIHDNSKTAAELDKHYQIIWDETQAHKFKKISHHLQAMKAFKNA.

Belongs to the UPF0227 family.

This Vibrio campbellii (strain ATCC BAA-1116) protein is UPF0227 protein VIBHAR_01524.